The following is a 328-amino-acid chain: DNA-directed RNA polymerase subunit alpha (328 aa).

The interval 1–234 (MQGSVTEFLK…EQLDAFVDLR (234 aa)) is alpha N-terminal domain (alpha-NTD). Positions 248 to 328 (FXPILLRPVD…NWPPASIAED (81 aa)) are alpha C-terminal domain (alpha-CTD).

Belongs to the RNA polymerase alpha chain family. In terms of assembly, homodimer. The RNAP catalytic core consists of 2 alpha, 1 beta, 1 beta' and 1 omega subunit. When a sigma factor is associated with the core the holoenzyme is formed, which can initiate transcription.

It catalyses the reaction RNA(n) + a ribonucleoside 5'-triphosphate = RNA(n+1) + diphosphate. Its function is as follows. DNA-dependent RNA polymerase catalyzes the transcription of DNA into RNA using the four ribonucleoside triphosphates as substrates. The chain is DNA-directed RNA polymerase subunit alpha from Haemophilus influenzae (strain ATCC 51907 / DSM 11121 / KW20 / Rd).